The following is a 204-amino-acid chain: Molybdenum cofactor guanylyltransferase (204 aa).

GTP-binding positions include 12–14, Lys-25, Asn-53, Asp-71, and Asp-101; that span reads LAG. Asp-101 is a Mg(2+) binding site.

It belongs to the MobA family. In terms of assembly, monomer. It depends on Mg(2+) as a cofactor.

It is found in the cytoplasm. The enzyme catalyses Mo-molybdopterin + GTP + H(+) = Mo-molybdopterin guanine dinucleotide + diphosphate. Its function is as follows. Transfers a GMP moiety from GTP to Mo-molybdopterin (Mo-MPT) cofactor (Moco or molybdenum cofactor) to form Mo-molybdopterin guanine dinucleotide (Mo-MGD) cofactor. The polypeptide is Molybdenum cofactor guanylyltransferase (Ralstonia nicotianae (strain ATCC BAA-1114 / GMI1000) (Ralstonia solanacearum)).